The following is a 462-amino-acid chain: ATP-dependent protease ATPase subunit HslU (462 aa).

Residues Ile-21, Gly-63–Glu-68, Asp-275, Glu-340, and Arg-412 each bind ATP.

This sequence belongs to the ClpX chaperone family. HslU subfamily. In terms of assembly, a double ring-shaped homohexamer of HslV is capped on each side by a ring-shaped HslU homohexamer. The assembly of the HslU/HslV complex is dependent on binding of ATP.

The protein localises to the cytoplasm. In terms of biological role, ATPase subunit of a proteasome-like degradation complex; this subunit has chaperone activity. The binding of ATP and its subsequent hydrolysis by HslU are essential for unfolding of protein substrates subsequently hydrolyzed by HslV. HslU recognizes the N-terminal part of its protein substrates and unfolds these before they are guided to HslV for hydrolysis. The chain is ATP-dependent protease ATPase subunit HslU from Pseudothermotoga lettingae (strain ATCC BAA-301 / DSM 14385 / NBRC 107922 / TMO) (Thermotoga lettingae).